A 670-amino-acid polypeptide reads, in one-letter code: tRNA 5-methylaminomethyl-2-thiouridine biosynthesis bifunctional protein MnmC (670 aa).

The tRNA (mnm(5)s(2)U34)-methyltransferase stretch occupies residues 1–242; it reads MTFSVQHAEI…KRECLSGLKI (242 aa). Positions 269–670 are FAD-dependent cmnm(5)s(2)U34 oxidoreductase; that stretch reads IGGGIASFCA…KKWLKGSKVE (402 aa).

It in the N-terminal section; belongs to the methyltransferase superfamily. tRNA (mnm(5)s(2)U34)-methyltransferase family. The protein in the C-terminal section; belongs to the DAO family. The cofactor is FAD.

It localises to the cytoplasm. The catalysed reaction is 5-aminomethyl-2-thiouridine(34) in tRNA + S-adenosyl-L-methionine = 5-methylaminomethyl-2-thiouridine(34) in tRNA + S-adenosyl-L-homocysteine + H(+). In terms of biological role, catalyzes the last two steps in the biosynthesis of 5-methylaminomethyl-2-thiouridine (mnm(5)s(2)U) at the wobble position (U34) in tRNA. Catalyzes the FAD-dependent demodification of cmnm(5)s(2)U34 to nm(5)s(2)U34, followed by the transfer of a methyl group from S-adenosyl-L-methionine to nm(5)s(2)U34, to form mnm(5)s(2)U34. This is tRNA 5-methylaminomethyl-2-thiouridine biosynthesis bifunctional protein MnmC from Haemophilus influenzae (strain 86-028NP).